The sequence spans 565 residues: Translation machinery-associated protein 64 (565 aa).

Residues 89-170 enclose the PUA domain; that stretch reads LPIVLTHGFV…VAVKIIHHFN (82 aa). An SWIB/MDM2 domain is found at 362–447; it reads TLYKPFNLAK…GEILHPLLTN (86 aa). Positions 475–547 constitute an SUI1 domain; it reads IKIITEMKIG…SIIDHLNKLG (73 aa).

It belongs to the eIF2D family. In terms of assembly, interacts with the 40S ribosomal subunit.

This is Translation machinery-associated protein 64 (TMA64) from Saccharomyces cerevisiae (strain ATCC 204508 / S288c) (Baker's yeast).